The sequence spans 202 residues: Superoxide dismutase [Cu-Zn], chloroplastic (202 aa).

The transit peptide at 1-48 (MASQTLVSPSPLSSHSLLRTSFSGVSVKLAPQFSTLATSNFKPLTVVA) directs the protein to the chloroplast. Residues His-94, His-96, and His-111 each contribute to the Cu cation site. Cys-105 and Cys-194 form a disulfide bridge. The Zn(2+) site is built by His-111, His-119, His-128, and Asp-131. Position 168 (His-168) interacts with Cu cation.

The protein belongs to the Cu-Zn superoxide dismutase family. Homotetramer. The cofactor is Cu cation. Zn(2+) is required as a cofactor.

It localises to the plastid. It is found in the chloroplast. It carries out the reaction 2 superoxide + 2 H(+) = H2O2 + O2. Destroys radicals which are normally produced within the cells and which are toxic to biological systems. The chain is Superoxide dismutase [Cu-Zn], chloroplastic (SODCP) from Pisum sativum (Garden pea).